The chain runs to 168 residues: Profilin-3 (168 aa).

Residues 14–36 (LSLEHSDKPQRRSRAKVKKKKKT) are disordered. Positions 24–36 (RRSRAKVKKKKKT) are enriched in basic residues.

Belongs to the profilin family. In terms of assembly, occurs in many kinds of cells as a complex with monomeric actin in a 1:1 ratio. Binding to the poly-proline motif of formins induces formation of oligomers through the N-terminal hydrophobic residues of PRF3. As to expression, expressed in roots, rosette leaves, cauline leaves, stems and flowers.

The protein localises to the cytoplasm. It localises to the cytoskeleton. Functionally, binds to actin monomers and regulates the organization of the actin cytoskeleton. Can increase the critical concentration (Cc) of actin assembly in vitro. Acts as a downstream effector of the hydrogen sulfide signaling to regulate the assembly and depolymerization of F-actin. At high concentrations, profilin prevents the polymerization of actin, whereas it enhances it at low concentrations. Binding to the poly-proline motif of formin induces oligomerization of PRF3. PRF3 oligomers inhibit formin-mediated actin assembly to modulate plant immunity triggered by pathogen-associated molecular patterns (PAMPs). The polypeptide is Profilin-3 (Arabidopsis thaliana (Mouse-ear cress)).